The sequence spans 122 residues: Large ribosomal subunit protein uL14 (122 aa).

It belongs to the universal ribosomal protein uL14 family. As to quaternary structure, part of the 50S ribosomal subunit. Forms a cluster with proteins L3 and L19. In the 70S ribosome, L14 and L19 interact and together make contacts with the 16S rRNA in bridges B5 and B8.

Functionally, binds to 23S rRNA. Forms part of two intersubunit bridges in the 70S ribosome. This chain is Large ribosomal subunit protein uL14, found in Rickettsia massiliae (strain Mtu5).